Here is a 331-residue protein sequence, read N- to C-terminus: MHNASYWGPERANTSCPAPAPTLGCPNASGPAPPLPPPLAVAVPVVYAVICAVGLAGNSAVLFVLLRAPRRKTVTNLFILNLAVADELFTLVPPVNIADFLLRRWPFGELLCKLVVAVDQYNTFSSLYFLTVMSADRYLVVLATAESRRVAGRTYGAARAVSLAVWGVATLVVLPFAVFARLDEEQGRRQCVLVFPQPEALWWRASRLYTLVLGFAIPVSTICVLYTSLLCRLRAIRLDSHAKALDRAKKRVTVLVVAILAVCLLVWTPYHLSTVVALTTDLPQTPLVIAVSYFITSLSYANSCLNPFLYAFLDDSFRRSLRQLLACRTTS.

At 1–43 the chain is on the extracellular side; it reads MHNASYWGPERANTSCPAPAPTLGCPNASGPAPPLPPPLAVAV. N-linked (GlcNAc...) asparagine glycans are attached at residues Asn3, Asn13, and Asn27. The chain crosses the membrane as a helical span at residues 44–66; sequence PVVYAVICAVGLAGNSAVLFVLL. At 67 to 75 the chain is on the cytoplasmic side; it reads RAPRRKTVT. Residues 76-100 traverse the membrane as a helical segment; the sequence is NLFILNLAVADELFTLVPPVNIADF. The Extracellular segment spans residues 101–115; sequence LLRRWPFGELLCKLV. Cys112 and Cys191 are joined by a disulfide. The helical transmembrane segment at 116–135 threads the bilayer; the sequence is VAVDQYNTFSSLYFLTVMSA. Topologically, residues 136-160 are cytoplasmic; it reads DRYLVVLATAESRRVAGRTYGAARA. Residues 161–180 form a helical membrane-spanning segment; sequence VSLAVWGVATLVVLPFAVFA. At 181–205 the chain is on the extracellular side; it reads RLDEEQGRRQCVLVFPQPEALWWRA. The helical transmembrane segment at 206–227 threads the bilayer; it reads SRLYTLVLGFAIPVSTICVLYT. Residues 228-251 are Cytoplasmic-facing; the sequence is SLLCRLRAIRLDSHAKALDRAKKR. Residues 252–276 traverse the membrane as a helical segment; it reads VTVLVVAILAVCLLVWTPYHLSTVV. Over 277-286 the chain is Extracellular; sequence ALTTDLPQTP. A helical membrane pass occupies residues 287–301; that stretch reads LVIAVSYFITSLSYA. At 302–331 the chain is on the cytoplasmic side; sequence NSCLNPFLYAFLDDSFRRSLRQLLACRTTS.

Belongs to the G-protein coupled receptor 1 family.

The protein localises to the cell membrane. Its function is as follows. Interacts specifically with a number of opioid ligands. Receptor for neuropeptides B and W, which may be involved in neuroendocrine system regulation, food intake and the organization of other signals. The polypeptide is Neuropeptides B/W receptor type 1 (NPBWR1) (Bos taurus (Bovine)).